Consider the following 50-residue polypeptide: Photosystem II reaction center protein M (50 aa).

The helical transmembrane segment at 7-27 (GFVASLLFVGIPTIFLIGLFI) threads the bilayer.

This sequence belongs to the PsbM family. As to quaternary structure, PSII is composed of 1 copy each of membrane proteins PsbA, PsbB, PsbC, PsbD, PsbE, PsbF, PsbH, PsbI, PsbJ, PsbK, PsbL, PsbM, PsbT, PsbX, PsbY, Psb30/Ycf12, peripheral proteins PsbO, CyanoQ (PsbQ), PsbU, PsbV and a large number of cofactors. It forms dimeric complexes.

The protein localises to the cellular thylakoid membrane. Functionally, one of the components of the core complex of photosystem II (PSII). PSII is a light-driven water:plastoquinone oxidoreductase that uses light energy to abstract electrons from H(2)O, generating O(2) and a proton gradient subsequently used for ATP formation. It consists of a core antenna complex that captures photons, and an electron transfer chain that converts photonic excitation into a charge separation. This subunit is found at the monomer-monomer interface. The chain is Photosystem II reaction center protein M from Prochlorococcus marinus subsp. pastoris (strain CCMP1986 / NIES-2087 / MED4).